The sequence spans 199 residues: GTP-binding protein Di-Ras2 (199 aa).

GTP-binding positions include 14-21 (GAGGVGKS), 33-39 (RESYIPT), 61-65 (DTTGS), and 121-124 (NKCD). At Ser35 the chain carries Phosphoserine. The Effector region motif lies at 36–44 (YIPTVEDTY). Ser126 is modified (phosphoserine). 152–153 (AK) contacts GTP. Cysteine methyl ester is present on Cys196. The S-geranylgeranyl cysteine moiety is linked to residue Cys196. The propeptide at 197 to 199 (VIM) is removed in mature form.

Belongs to the small GTPase superfamily. Di-Ras family. Post-translationally, ubiquitinated by the ECS(ASB11) complex via 'Lys-11'-linked ubiquitin chains, leading to its degradation by the proteasome.

The protein resides in the cell membrane. The catalysed reaction is GTP + H2O = GDP + phosphate + H(+). Functionally, displays low GTPase activity and exists predominantly in the GTP-bound form. In Pongo abelii (Sumatran orangutan), this protein is GTP-binding protein Di-Ras2 (DIRAS2).